Reading from the N-terminus, the 172-residue chain is C-phycocyanin subunit beta (172 aa).

Asn-72 is subject to N4-methylasparagine. The (2R,3E)-phycocyanobilin site is built by Cys-82 and Cys-153.

It belongs to the phycobiliprotein family. In terms of assembly, heterodimer of an alpha and a beta subunit, which further assembles into trimers and the trimers into hexamers. In terms of processing, contains two covalently linked bilin chromophores. The chromophore on position 82 is added by the phycocyanobilin lyase CpcUS, while the chromophore on position 153 is added by the phycocyanobilin lyase CpcT.

The protein localises to the cellular thylakoid membrane. Functionally, light-harvesting photosynthetic bile pigment-protein from the phycobiliprotein complex (phycobilisome, PBS). Phycocyanin is the major phycobiliprotein in the PBS rod. This chain is C-phycocyanin subunit beta (cpcB), found in Picosynechococcus sp. (strain ATCC 27264 / PCC 7002 / PR-6) (Agmenellum quadruplicatum).